Here is a 235-residue protein sequence, read N- to C-terminus: MLKLIDITWLYHHLPMRFTLAVERGEQVAILGPSGAGKSTLLNLIAGFLAPASGTLLIAGDDHTLTPPSRRPVSMLFQENNLFSHLNVQQNIGLGLNPGLTLNASQREKRDAIAHQMGIESLMTRLPGELSGGQRQRVALARCLVREQPVLLLDEPFSALDPALRQEMLTLVSDICRERQLTLLMVSHSVEDAARIAPRSIVVADGRIAWQGKTDELLSGQASASALLGIKSHIL.

Residues 2 to 230 (LKLIDITWLY…QASASALLGI (229 aa)) form the ABC transporter domain. 32 to 39 (GPSGAGKS) contributes to the ATP binding site.

The protein belongs to the ABC transporter superfamily. Thiamine importer (TC 3.A.1.19.1) family. As to quaternary structure, the complex is composed of two ATP-binding proteins (ThiQ), two transmembrane proteins (ThiP) and a solute-binding protein (ThiB).

The protein localises to the cell inner membrane. The catalysed reaction is thiamine(out) + ATP + H2O = thiamine(in) + ADP + phosphate + H(+). Functionally, part of the ABC transporter complex ThiBPQ involved in thiamine import. Responsible for energy coupling to the transport system. Is also involved in thiamine pyrophosphate (TPP) transport. This chain is Thiamine import ATP-binding protein ThiQ, found in Salmonella typhimurium (strain LT2 / SGSC1412 / ATCC 700720).